Reading from the N-terminus, the 175-residue chain is Alkyl hydroperoxide reductase AhpD (175 aa).

Cys131 acts as the Proton donor in catalysis. Cys131 and Cys134 are disulfide-bonded. Cys134 functions as the Cysteine sulfenic acid (-SOH) intermediate in the catalytic mechanism.

It belongs to the AhpD family.

It carries out the reaction N(6)-[(R)-dihydrolipoyl]-L-lysyl-[lipoyl-carrier protein] + a hydroperoxide = N(6)-[(R)-lipoyl]-L-lysyl-[lipoyl-carrier protein] + an alcohol + H2O. Functionally, antioxidant protein with alkyl hydroperoxidase activity. Required for the reduction of the AhpC active site cysteine residues and for the regeneration of the AhpC enzyme activity. The sequence is that of Alkyl hydroperoxide reductase AhpD from Brucella anthropi (strain ATCC 49188 / DSM 6882 / CCUG 24695 / JCM 21032 / LMG 3331 / NBRC 15819 / NCTC 12168 / Alc 37) (Ochrobactrum anthropi).